Consider the following 644-residue polypeptide: Tubulin--tyrosine ligase-like protein 12 (644 aa).

The segment covering 1–13 (MEAERGPERRPAE) has biased composition (basic and acidic residues). The segment at 1-25 (MEAERGPERRPAERSSPGQTPEEGA) is disordered. The TTL domain maps to 300–644 (PHGHIFKVYT…PGGCHVTCLV (345 aa)). Residues 450-453 (SKYI), K468, and D470 each bind ATP.

Belongs to the tubulin--tyrosine ligase family. As to quaternary structure, interacts with MAVS; the interaction prevents MAVS binding to TBK1 and IKBKE. Interacts (via N-terminus) with TBK1 (via protein kinase domain). Interacts (via TTL domain) with IKBKE (via protein kinase domain). Interacts with tubulin alpha. Interacts with histone H3 and histone H4 (when trimethylated at 'Lys-20' (H4K20me3)). Interacts with CBX3. As to expression, expressed in the basal layer of prostate and endothelial cells. Increased expression in prostatic intraepithelial neoplasia and metastatic lesions.

The protein localises to the cytoplasm. It is found in the midbody. The protein resides in the cytoskeleton. It localises to the microtubule organizing center. Its subcellular location is the centrosome. The protein localises to the spindle. It is found in the nucleus. Negatively regulates post-translational modifications of tubulin, including detyrosination of the C-terminus and polyglutamylation of glutamate residues. Also, indirectly promotes histone H4 trimethylation at 'Lys-20' (H4K20me3). Probably by controlling tubulin and/or histone H4 post-translational modifications, plays a role in mitosis and in maintaining chromosome number stability. During RNA virus-mediated infection, acts as a negative regulator of the RIG-I pathway by preventing MAVS binding to TBK1 and IKBKE. The chain is Tubulin--tyrosine ligase-like protein 12 (TTLL12) from Homo sapiens (Human).